The chain runs to 372 residues: Peptidyl-prolyl cis-trans isomerase D (372 aa).

Residues 10–173 (FFDIQIGQQQ…TDVTIAECGE (164 aa)) enclose the PPIase cyclophilin-type domain. The disordered stretch occupies residues 174-193 (LTGEDYDNADKQTPDATGDP). 3 TPR repeats span residues 215 to 248 (ASELKNFGNTAFKNGNIALGLEKYQKGLRYLNEF), 268 to 304 (FTLHSNSSLLANKLGQFKNGKTWATYALDVADAASAK), and 309 to 342 (AKVYYRRAVAESGLKEEDEALKDLEQASTLAPSD).

Belongs to the cyclophilin-type PPIase family. PPIase D subfamily.

It is found in the cytoplasm. The catalysed reaction is [protein]-peptidylproline (omega=180) = [protein]-peptidylproline (omega=0). PPIases accelerate the folding of proteins. It catalyzes the cis-trans isomerization of proline imidic peptide bonds in oligopeptides. This chain is Peptidyl-prolyl cis-trans isomerase D (cpr6), found in Emericella nidulans (strain FGSC A4 / ATCC 38163 / CBS 112.46 / NRRL 194 / M139) (Aspergillus nidulans).